Consider the following 558-residue polypeptide: uncharacterized protein (558 aa).

A disordered region spans residues 531 to 558; it reads NEDDGTSASPTAMTFDMPPEHPFYSHYR.

This is an uncharacterized protein from Saccharomyces cerevisiae (strain ATCC 204508 / S288c) (Baker's yeast).